Reading from the N-terminus, the 428-residue chain is Tyrosine--tRNA ligase (428 aa).

An L-tyrosine-binding site is contributed by tyrosine 41. Residues proline 46–histidine 55 carry the 'HIGH' region motif. Positions 179 and 183 each coordinate L-tyrosine. A 'KMSKS' region motif is present at residues lysine 239–threonine 243. Lysine 242 provides a ligand contact to ATP. Positions alanine 361–glycine 418 constitute an S4 RNA-binding domain.

It belongs to the class-I aminoacyl-tRNA synthetase family. TyrS type 1 subfamily. Homodimer.

Its subcellular location is the cytoplasm. It carries out the reaction tRNA(Tyr) + L-tyrosine + ATP = L-tyrosyl-tRNA(Tyr) + AMP + diphosphate + H(+). Catalyzes the attachment of tyrosine to tRNA(Tyr) in a two-step reaction: tyrosine is first activated by ATP to form Tyr-AMP and then transferred to the acceptor end of tRNA(Tyr). This Klebsiella pneumoniae subsp. pneumoniae (strain ATCC 700721 / MGH 78578) protein is Tyrosine--tRNA ligase.